Reading from the N-terminus, the 107-residue chain is Large ribosomal subunit protein uL24 (107 aa).

Belongs to the universal ribosomal protein uL24 family. In terms of assembly, part of the 50S ribosomal subunit.

One of two assembly initiator proteins, it binds directly to the 5'-end of the 23S rRNA, where it nucleates assembly of the 50S subunit. Its function is as follows. One of the proteins that surrounds the polypeptide exit tunnel on the outside of the subunit. This Thermoanaerobacter pseudethanolicus (strain ATCC 33223 / 39E) (Clostridium thermohydrosulfuricum) protein is Large ribosomal subunit protein uL24.